Here is a 271-residue protein sequence, read N- to C-terminus: Integral membrane protein 2C (271 aa).

Position 41 is a phosphothreonine (T41). A helical; Signal-anchor for type II membrane protein membrane pass occupies residues 59–79 (VGGVCYLSMGMVVLLMGLVFA). The 95-residue stretch at 140-234 (FGGGDPADII…LCSGKDTYRL (95 aa)) folds into the BRICHOS domain. A disulfide bridge links C167 with C226. N173 carries an N-linked (GlcNAc...) asparagine glycan.

The protein belongs to the ITM2 family. Interacts with BACE1. Interacts with APP. Interacts with STMN2. In terms of processing, type I membrane-bound, as well as soluble, furin has a pre-eminent role in ITM2C proteolytic processing. PCSK7 and PCSK5 may also be involved although to a lesser extent. The soluble form of PCSK7 is incapable of processing ITM2C. Fails to undergo shedding by ADAM10 and intramembrane cleavage by SPPL2B.

It localises to the lysosome membrane. The protein localises to the cell membrane. Its function is as follows. Negative regulator of amyloid-beta peptide production. May inhibit the processing of APP by blocking its access to alpha- and beta-secretase. Binding to the beta-secretase-cleaved APP C-terminal fragment is negligible, suggesting that ITM2C is a poor gamma-secretase cleavage inhibitor. May play a role in TNF-induced cell death and neuronal differentiation. The sequence is that of Integral membrane protein 2C (ITM2C) from Bos taurus (Bovine).